The chain runs to 357 residues: DNA replication and repair protein RecF (357 aa).

30–37 contacts ATP; sequence GANGSGKT.

It belongs to the RecF family.

It localises to the cytoplasm. Functionally, the RecF protein is involved in DNA metabolism; it is required for DNA replication and normal SOS inducibility. RecF binds preferentially to single-stranded, linear DNA. It also seems to bind ATP. The polypeptide is DNA replication and repair protein RecF (Shigella dysenteriae serotype 1 (strain Sd197)).